Here is a 518-residue protein sequence, read N- to C-terminus: Glutamate--cysteine ligase (518 aa).

It belongs to the glutamate--cysteine ligase type 1 family. Type 1 subfamily.

It carries out the reaction L-cysteine + L-glutamate + ATP = gamma-L-glutamyl-L-cysteine + ADP + phosphate + H(+). It participates in sulfur metabolism; glutathione biosynthesis; glutathione from L-cysteine and L-glutamate: step 1/2. This Salmonella paratyphi C (strain RKS4594) protein is Glutamate--cysteine ligase.